The chain runs to 295 residues: Glycine N-acyltransferase-like protein Keg1 (295 aa).

Lys41 carries the post-translational modification N6-acetyllysine; alternate. Position 41 is an N6-succinyllysine; alternate (Lys41). Lys43 carries the post-translational modification N6-acetyllysine. An N6-acetyllysine; alternate modification is found at Lys48. N6-succinyllysine; alternate is present on Lys48. An N6-acetyllysine mark is found at Lys80 and Lys83. An N6-acetyllysine; alternate mark is found at Lys124, Lys128, and Lys140. N6-succinyllysine; alternate occurs at positions 124, 128, and 140. Lys150 bears the N6-acetyllysine mark. Lys255 carries the post-translational modification N6-acetyllysine; alternate. Lys255 bears the N6-succinyllysine; alternate mark.

Belongs to the glycine N-acyltransferase family. As to quaternary structure, binds to microtubules. Specifically expressed in kidney and liver. Up-regulated in the regenerating liver as well as in hepatocellular carcinoma.

Its subcellular location is the cytoplasm. It localises to the cytoskeleton. The protein localises to the microtubule organizing center. It is found in the centrosome. It carries out the reaction an acyl-CoA + glycine = an N-acylglycine + CoA + H(+). Its function is as follows. Acyltransferase which transfers the acyl group to the N-terminus of glycine. Can conjugate a multitude of substrates to form a variety of N-acylglycines. This chain is Glycine N-acyltransferase-like protein Keg1 (Keg1), found in Rattus norvegicus (Rat).